We begin with the raw amino-acid sequence, 270 residues long: Ribosomal RNA small subunit methyltransferase A (270 aa).

Residues N18, L20, G45, E66, D91, and N112 each coordinate S-adenosyl-L-methionine.

Belongs to the class I-like SAM-binding methyltransferase superfamily. rRNA adenine N(6)-methyltransferase family. RsmA subfamily.

It is found in the cytoplasm. The enzyme catalyses adenosine(1518)/adenosine(1519) in 16S rRNA + 4 S-adenosyl-L-methionine = N(6)-dimethyladenosine(1518)/N(6)-dimethyladenosine(1519) in 16S rRNA + 4 S-adenosyl-L-homocysteine + 4 H(+). Functionally, specifically dimethylates two adjacent adenosines (A1518 and A1519) in the loop of a conserved hairpin near the 3'-end of 16S rRNA in the 30S particle. May play a critical role in biogenesis of 30S subunits. The sequence is that of Ribosomal RNA small subunit methyltransferase A from Shewanella piezotolerans (strain WP3 / JCM 13877).